Reading from the N-terminus, the 159-residue chain is UPF0201 protein MK0399 (159 aa).

It belongs to the UPF0201 family.

The protein is UPF0201 protein MK0399 of Methanopyrus kandleri (strain AV19 / DSM 6324 / JCM 9639 / NBRC 100938).